The following is a 143-amino-acid chain: Ribonuclease H (143 aa).

The RNase H type-1 domain occupies 1 to 140 (MKVEIYTDGA…VDALANLGIE (140 aa)). Mg(2+) contacts are provided by D8, E46, D68, and D132.

This sequence belongs to the RNase H family. In terms of assembly, monomer. It depends on Mg(2+) as a cofactor.

The protein resides in the cytoplasm. The enzyme catalyses Endonucleolytic cleavage to 5'-phosphomonoester.. In terms of biological role, endonuclease that specifically degrades the RNA of RNA-DNA hybrids. This Legionella pneumophila (strain Paris) protein is Ribonuclease H.